A 159-amino-acid chain; its full sequence is 3-hydroxyacyl-[acyl-carrier-protein] dehydratase FabZ (159 aa).

His65 is an active-site residue.

This sequence belongs to the thioester dehydratase family. FabZ subfamily.

The protein localises to the cytoplasm. The enzyme catalyses a (3R)-hydroxyacyl-[ACP] = a (2E)-enoyl-[ACP] + H2O. In terms of biological role, involved in unsaturated fatty acids biosynthesis. Catalyzes the dehydration of short chain beta-hydroxyacyl-ACPs and long chain saturated and unsaturated beta-hydroxyacyl-ACPs. The chain is 3-hydroxyacyl-[acyl-carrier-protein] dehydratase FabZ from Microcystis aeruginosa (strain NIES-843 / IAM M-2473).